A 94-amino-acid chain; its full sequence is Integration host factor subunit beta (94 aa).

This sequence belongs to the bacterial histone-like protein family. In terms of assembly, heterodimer of an alpha and a beta chain.

Functionally, this protein is one of the two subunits of integration host factor, a specific DNA-binding protein that functions in genetic recombination as well as in transcriptional and translational control. The chain is Integration host factor subunit beta (ihfB) from Serratia marcescens.